We begin with the raw amino-acid sequence, 161 residues long: Phosphopantetheine adenylyltransferase (161 aa).

Thr-9 contacts substrate. ATP-binding positions include 9 to 10 (TF) and His-17. Substrate is bound by residues Lys-41, Leu-73, and Arg-87. Residues 88–90 (GLR), Glu-98, and 123–129 (YQFISGT) each bind ATP.

It belongs to the bacterial CoaD family. In terms of assembly, homohexamer. Mg(2+) is required as a cofactor.

Its subcellular location is the cytoplasm. The enzyme catalyses (R)-4'-phosphopantetheine + ATP + H(+) = 3'-dephospho-CoA + diphosphate. Its pathway is cofactor biosynthesis; coenzyme A biosynthesis; CoA from (R)-pantothenate: step 4/5. Reversibly transfers an adenylyl group from ATP to 4'-phosphopantetheine, yielding dephospho-CoA (dPCoA) and pyrophosphate. In Cupriavidus pinatubonensis (strain JMP 134 / LMG 1197) (Cupriavidus necator (strain JMP 134)), this protein is Phosphopantetheine adenylyltransferase.